The chain runs to 176 residues: NAD(P)H-quinone oxidoreductase subunit 6, chloroplastic (176 aa).

The next 5 membrane-spanning stretches (helical) occupy residues 10 to 30 (FLLV…VLLT), 32 to 52 (PIYS…FYIL), 61 to 81 (AQLL…VMFM), 92 to 112 (LWTL…LSLI), and 152 to 172 (FFLP…GAIA).

Belongs to the complex I subunit 6 family. NDH is composed of at least 16 different subunits, 5 of which are encoded in the nucleus.

The protein resides in the plastid. Its subcellular location is the chloroplast thylakoid membrane. It catalyses the reaction a plastoquinone + NADH + (n+1) H(+)(in) = a plastoquinol + NAD(+) + n H(+)(out). The catalysed reaction is a plastoquinone + NADPH + (n+1) H(+)(in) = a plastoquinol + NADP(+) + n H(+)(out). NDH shuttles electrons from NAD(P)H:plastoquinone, via FMN and iron-sulfur (Fe-S) centers, to quinones in the photosynthetic chain and possibly in a chloroplast respiratory chain. The immediate electron acceptor for the enzyme in this species is believed to be plastoquinone. Couples the redox reaction to proton translocation, and thus conserves the redox energy in a proton gradient. This chain is NAD(P)H-quinone oxidoreductase subunit 6, chloroplastic (ndhG), found in Pelargonium hortorum (Common geranium).